The chain runs to 389 residues: Formate-dependent phosphoribosylglycinamide formyltransferase (389 aa).

Residues Glu12–Leu13 and Glu72 contribute to the N(1)-(5-phospho-beta-D-ribosyl)glycinamide site. ATP contacts are provided by residues Arg104, Lys145, Ser150 to Gln155, Glu185 to Ile188, and Glu193. Residues Asp109–Leu301 enclose the ATP-grasp domain. Positions 258 and 271 each coordinate Mg(2+). Residues Asp278, Lys350, and Arg357–Arg358 contribute to the N(1)-(5-phospho-beta-D-ribosyl)glycinamide site.

This sequence belongs to the PurK/PurT family. Homodimer.

The catalysed reaction is N(1)-(5-phospho-beta-D-ribosyl)glycinamide + formate + ATP = N(2)-formyl-N(1)-(5-phospho-beta-D-ribosyl)glycinamide + ADP + phosphate + H(+). It functions in the pathway purine metabolism; IMP biosynthesis via de novo pathway; N(2)-formyl-N(1)-(5-phospho-D-ribosyl)glycinamide from N(1)-(5-phospho-D-ribosyl)glycinamide (formate route): step 1/1. Involved in the de novo purine biosynthesis. Catalyzes the transfer of formate to 5-phospho-ribosyl-glycinamide (GAR), producing 5-phospho-ribosyl-N-formylglycinamide (FGAR). Formate is provided by PurU via hydrolysis of 10-formyl-tetrahydrofolate. The protein is Formate-dependent phosphoribosylglycinamide formyltransferase of Phocaeicola vulgatus (strain ATCC 8482 / DSM 1447 / JCM 5826 / CCUG 4940 / NBRC 14291 / NCTC 11154) (Bacteroides vulgatus).